The chain runs to 314 residues: 3'-5' exoribonuclease YhaM (314 aa).

The 117-residue stretch at 163–279 (HVVSMLDLAK…LHYIDNLDAK (117 aa)) folds into the HD domain.

This sequence belongs to the YhaM family.

In terms of biological role, shows a 3'-5' exoribonuclease activity. In Bacillus cereus (strain AH820), this protein is 3'-5' exoribonuclease YhaM.